Here is a 259-residue protein sequence, read N- to C-terminus: Deoxyribose-phosphate aldolase (259 aa).

The active-site Proton donor/acceptor is the aspartate 102. Catalysis depends on lysine 167, which acts as the Schiff-base intermediate with acetaldehyde. The Proton donor/acceptor role is filled by lysine 201.

Belongs to the DeoC/FbaB aldolase family. DeoC type 2 subfamily.

Its subcellular location is the cytoplasm. The enzyme catalyses 2-deoxy-D-ribose 5-phosphate = D-glyceraldehyde 3-phosphate + acetaldehyde. It functions in the pathway carbohydrate degradation; 2-deoxy-D-ribose 1-phosphate degradation; D-glyceraldehyde 3-phosphate and acetaldehyde from 2-deoxy-alpha-D-ribose 1-phosphate: step 2/2. Functionally, catalyzes a reversible aldol reaction between acetaldehyde and D-glyceraldehyde 3-phosphate to generate 2-deoxy-D-ribose 5-phosphate. This is Deoxyribose-phosphate aldolase from Erwinia tasmaniensis (strain DSM 17950 / CFBP 7177 / CIP 109463 / NCPPB 4357 / Et1/99).